Consider the following 126-residue polypeptide: Small ribosomal subunit protein uS12 (126 aa).

3-methylthioaspartic acid is present on D89.

Belongs to the universal ribosomal protein uS12 family. In terms of assembly, part of the 30S ribosomal subunit. Contacts proteins S8 and S17. May interact with IF1 in the 30S initiation complex.

Its function is as follows. With S4 and S5 plays an important role in translational accuracy. Interacts with and stabilizes bases of the 16S rRNA that are involved in tRNA selection in the A site and with the mRNA backbone. Located at the interface of the 30S and 50S subunits, it traverses the body of the 30S subunit contacting proteins on the other side and probably holding the rRNA structure together. The combined cluster of proteins S8, S12 and S17 appears to hold together the shoulder and platform of the 30S subunit. This is Small ribosomal subunit protein uS12 from Polynucleobacter necessarius subsp. necessarius (strain STIR1).